Consider the following 234-residue polypeptide: Small ribosomal subunit protein eS4 (234 aa).

The S4 RNA-binding; degenerate domain occupies 38–99 (IPLLIALRDY…GNDYLVSYDR (62 aa)).

Belongs to the eukaryotic ribosomal protein eS4 family.

This is Small ribosomal subunit protein eS4 (rps4e) from Picrophilus torridus (strain ATCC 700027 / DSM 9790 / JCM 10055 / NBRC 100828 / KAW 2/3).